The following is a 130-amino-acid chain: Small ribosomal subunit protein uS8 (130 aa).

Position 88 is an N6-succinyllysine (Lys88).

It belongs to the universal ribosomal protein uS8 family. Component of the 40S ribosomal subunit. Part of the small subunit (SSU) processome, composed of more than 70 proteins and the RNA chaperone small nucleolar RNA (snoRNA) U3.

The protein resides in the cytoplasm. It localises to the nucleus. Its subcellular location is the nucleolus. In terms of biological role, component of the small ribosomal subunit. Part of the small subunit (SSU) processome, first precursor of the small eukaryotic ribosomal subunit. During the assembly of the SSU processome in the nucleolus, many ribosome biogenesis factors, an RNA chaperone and ribosomal proteins associate with the nascent pre-rRNA and work in concert to generate RNA folding, modifications, rearrangements and cleavage as well as targeted degradation of pre-ribosomal RNA by the RNA exosome. Required for proper erythropoiesis. The polypeptide is Small ribosomal subunit protein uS8 (RPS15A) (Pongo abelii (Sumatran orangutan)).